The chain runs to 889 residues: DNA mismatch repair protein MutS (889 aa).

Residue 622–629 participates in ATP binding; the sequence is GPNMAGKS. Residues 869 to 889 are disordered; sequence QRVKRPEKAPADVTAETEDQE.

Belongs to the DNA mismatch repair MutS family.

This protein is involved in the repair of mismatches in DNA. It is possible that it carries out the mismatch recognition step. This protein has a weak ATPase activity. This Desulfatibacillum aliphaticivorans protein is DNA mismatch repair protein MutS.